The chain runs to 431 residues: Protein prenyltransferase alpha subunit repeat-containing protein 1-B (431 aa).

PFTA repeat units lie at residues 85-118 (ELIDVTCTLLLLNPDFTTAWNVRKELIQSGTLNP), 120-153 (KDLQLGKLALTKFPKSPETWIHRRWVLQRVVQEL), 178-211 (EEMHVCYEAAGRYPSNYNSWSHRIWVIQHLGNLN), 217-250 (DELSSTKHWVSMHVSDHSGFHYRQFLLKSLLCKT), and 293-326 (EEMKLNRELLDSYPGHETLWCHRRQIFKLIHQLL). Positions 363–383 (PMDVDGMSDPNKQGYTQETKR) are disordered. One copy of the PFTA 6 repeat lies at 394 to 431 (SLDSELRFINCVLTNCCSPEQSRFAASYRKWLLSLQGY).

Belongs to the protein prenyltransferase subunit alpha family.

In Xenopus laevis (African clawed frog), this protein is Protein prenyltransferase alpha subunit repeat-containing protein 1-B (ptar1-b).